Consider the following 435-residue polypeptide: Nucleoredoxin (435 aa).

Ser-2 bears the N-acetylserine mark. Residues 167-321 (PKPFREVIAG…VLELSDSNAV (155 aa)) form the Thioredoxin domain.

It belongs to the nucleoredoxin family. In terms of assembly, associates with the phosphatase 2A holoenzyme. Interacts with PPP2CA; the interaction is direct. Interacts with DVL1 (via PDZ domain); the interaction is direct and regulated by oxidative stress.

It is found in the cytoplasm. It localises to the cytosol. Its subcellular location is the nucleus. It catalyses the reaction [protein]-dithiol + NAD(+) = [protein]-disulfide + NADH + H(+). It carries out the reaction [protein]-dithiol + NADP(+) = [protein]-disulfide + NADPH + H(+). Functionally, functions as a redox-dependent negative regulator of the Wnt signaling pathway, possibly by preventing ubiquitination of DVL3 by the BCR(KLHL12) complex. May also function as a transcriptional regulator act as a regulator of protein phosphatase 2A (PP2A). The protein is Nucleoredoxin (NXN) of Bos taurus (Bovine).